The primary structure comprises 586 residues: Serine/threonine-protein kinase TDA1 (586 aa).

Positions 1–26 (MTTASSSASQLQQRLPEEKPWPQLSG) are disordered. The Protein kinase domain maps to 39–351 (VTNHNSLGDG…AKNLKQHPFI (313 aa)). ATP is bound by residues 45-53 (LGDGNFSVV) and Lys-68. Asp-180 (proton acceptor) is an active-site residue. Residues 503–524 (TTPESRSNFNTPKTLSRQGSST) are disordered. Phosphothreonine is present on Thr-504. Phosphoserine occurs at positions 509 and 518. Thr-538 carries the post-translational modification Phosphothreonine. Ser-578 is subject to Phosphoserine.

The protein belongs to the protein kinase superfamily. Ser/Thr protein kinase family. Interacts with RIM11.

The protein resides in the cytoplasm. Its subcellular location is the nucleus. It carries out the reaction L-seryl-[protein] + ATP = O-phospho-L-seryl-[protein] + ADP + H(+). It catalyses the reaction L-threonyl-[protein] + ATP = O-phospho-L-threonyl-[protein] + ADP + H(+). Functionally, serine/threonine protein kinase shown to have protein phosphorylation activity in vitro. The chain is Serine/threonine-protein kinase TDA1 (TDA1) from Saccharomyces cerevisiae (strain ATCC 204508 / S288c) (Baker's yeast).